Reading from the N-terminus, the 350-residue chain is MGLFSRKRDHTPAVPKEKLIPCDKIFLDPPAKYGNAPLLEPISEDQNEKYRAVLRHFQDDDLKLPENLNDLDNGTHANDRPLSDWEKFWLSRECFLRYLRANKWNTANAIKGLTKTLVWRREIGLTHGKEDKDPLTADKVAVENETGKQVILGFDNAKRPLYYMKNGRQNTESSFRQVQELVYMMETATTVAPQGVEKITVLVDFKSYKEPGIITDKAPPISIARMCLNVMQDHYPERLAKCVLINIPWFAWAFLKMMYPFLDPATKAKAIFDEPFENHIEPSQLDALYNGLLDFKYKHEVYWPDMVKKVDDLRLKRFDRFLKFGGIVGLSEYDTKGQHDELKYPVDMVI.

Residues K139–Y297 enclose the CRAL-TRIO domain.

In terms of assembly, interacts with phosphatidylserine decarboxylase PSD2. Also interacts with PBI1.

The protein resides in the cytoplasm. Its subcellular location is the microsome. It catalyses the reaction a 1,2-diacyl-sn-glycero-3-phospho-(1D-myo-inositol)(in) = a 1,2-diacyl-sn-glycero-3-phospho-(1D-myo-inositol)(out). Has phosphatidylinositol transfer activity. Involved in the regulation of the phospholipid composition of plasma- and endomembranes. Altering plasma membrane composition may provide a possible mechanism for multidrug resistance. Contributes to efficient phospholipase D1 activation and phospholipase B1 inhibition in the regulation of phospholipid turnover. Forms a complex with phosphatidylserine decarboxylase PSD2 that seems essential for maintenance of vacuolar phosphatidylethanolamine (PE) levels. Allows interorganelle phosphatidylserine (PtdSer) transport via a process that involves the acceptor membrane complex PDR17-PDS2 that binds to PBI1 which in turn ligates to SCS2 and phosphatidic acid present in the donor membrane, forming a zone of apposition that facilitates PtdSer transfer. This chain is Phosphatidylinositol transfer protein PDR17, found in Saccharomyces cerevisiae (strain ATCC 204508 / S288c) (Baker's yeast).